The following is a 273-amino-acid chain: 2,3,4,5-tetrahydropyridine-2,6-dicarboxylate N-succinyltransferase (273 aa).

Arg-104 and Asp-141 together coordinate substrate.

This sequence belongs to the transferase hexapeptide repeat family. In terms of assembly, homotrimer.

Its subcellular location is the cytoplasm. The enzyme catalyses (S)-2,3,4,5-tetrahydrodipicolinate + succinyl-CoA + H2O = (S)-2-succinylamino-6-oxoheptanedioate + CoA. It participates in amino-acid biosynthesis; L-lysine biosynthesis via DAP pathway; LL-2,6-diaminopimelate from (S)-tetrahydrodipicolinate (succinylase route): step 1/3. The polypeptide is 2,3,4,5-tetrahydropyridine-2,6-dicarboxylate N-succinyltransferase (Psychrobacter arcticus (strain DSM 17307 / VKM B-2377 / 273-4)).